The chain runs to 182 residues: Inner membrane-spanning protein YciB (182 aa).

5 helical membrane-spanning segments follow: residues 20 to 42, 55 to 75, 76 to 96, 123 to 143, and 153 to 173; these read GGIY…WVYY, LIMI…TFIL, LKPT…AQFF, LNLA…YIAF, and FKLF…GFWM.

Belongs to the YciB family.

The protein localises to the cell inner membrane. Its function is as follows. Plays a role in cell envelope biogenesis, maintenance of cell envelope integrity and membrane homeostasis. The polypeptide is Inner membrane-spanning protein YciB (Polynucleobacter asymbioticus (strain DSM 18221 / CIP 109841 / QLW-P1DMWA-1) (Polynucleobacter necessarius subsp. asymbioticus)).